Here is a 487-residue protein sequence, read N- to C-terminus: Protein nucleotidyltransferase YdiU (487 aa).

7 residues coordinate ATP: G92, R95, K106, D118, G119, R169, and R176. D253 functions as the Proton acceptor in the catalytic mechanism. Residues N254 and D263 each coordinate Mg(2+). D263 provides a ligand contact to ATP.

It belongs to the SELO family. Mg(2+) serves as cofactor. It depends on Mn(2+) as a cofactor.

The enzyme catalyses L-seryl-[protein] + ATP = 3-O-(5'-adenylyl)-L-seryl-[protein] + diphosphate. It catalyses the reaction L-threonyl-[protein] + ATP = 3-O-(5'-adenylyl)-L-threonyl-[protein] + diphosphate. It carries out the reaction L-tyrosyl-[protein] + ATP = O-(5'-adenylyl)-L-tyrosyl-[protein] + diphosphate. The catalysed reaction is L-histidyl-[protein] + UTP = N(tele)-(5'-uridylyl)-L-histidyl-[protein] + diphosphate. The enzyme catalyses L-seryl-[protein] + UTP = O-(5'-uridylyl)-L-seryl-[protein] + diphosphate. It catalyses the reaction L-tyrosyl-[protein] + UTP = O-(5'-uridylyl)-L-tyrosyl-[protein] + diphosphate. Nucleotidyltransferase involved in the post-translational modification of proteins. It can catalyze the addition of adenosine monophosphate (AMP) or uridine monophosphate (UMP) to a protein, resulting in modifications known as AMPylation and UMPylation. In Bordetella pertussis (strain Tohama I / ATCC BAA-589 / NCTC 13251), this protein is Protein nucleotidyltransferase YdiU.